Here is a 451-residue protein sequence, read N- to C-terminus: MSQGYSEKVKELLDSVGAAFFDRVKIKLADGLVLEGLLMPRPAFGDPDVVVLKLDNGYNIGISLQRIVSVELLEKFSPREAPTPGEEEGSQEDFGQPEPRVFFVGTGGTIASRVDYVTGAVYPYFTAEELYSMIPELKRLARISSETLFSIFSEDMTPSHWQQLASKIGEIFRRESDVKGVVVAHGTDTLHYSAAAMAFAVQEAPGPIVFVGAQRSSDRPSSDAALNVIGATVVAVHAPFAESVIAMHGSVNDDTILVHRGVRARKMHTSRRDAFMSINSKPIAEVDPLRGSLKLSTSTYKGRGDDVVVQASFSDKVALVKFYPGMSPDIFDFYLEKGFKGLVIEGTGLGHVSTALIDSVRRLVREGVFVAMASQCIFGRVNMNVYRTGVELIKAGVVPAGDMIPETAYVKLSWILGQTEDPEEIQRLFTANLAFEISERSEFDHYPGARW.

Positions 78–97 (PREAPTPGEEEGSQEDFGQP) are disordered. An Asparaginase/glutaminase domain is found at 99–432 (PRVFFVGTGG…EEIQRLFTAN (334 aa)). Residues Thr109, Thr187, Asp188, and Lys266 contribute to the active site.

The protein belongs to the asparaginase 1 family. GatD subfamily. In terms of assembly, heterodimer of GatD and GatE.

The enzyme catalyses L-glutamyl-tRNA(Gln) + L-glutamine + ATP + H2O = L-glutaminyl-tRNA(Gln) + L-glutamate + ADP + phosphate + H(+). In terms of biological role, allows the formation of correctly charged Gln-tRNA(Gln) through the transamidation of misacylated Glu-tRNA(Gln) in organisms which lack glutaminyl-tRNA synthetase. The reaction takes place in the presence of glutamine and ATP through an activated gamma-phospho-Glu-tRNA(Gln). The GatDE system is specific for glutamate and does not act on aspartate. This Thermofilum pendens (strain DSM 2475 / Hrk 5) protein is Glutamyl-tRNA(Gln) amidotransferase subunit D.